The chain runs to 106 residues: Tapetal oleosin GRP-19 (106 aa).

3 consecutive transmembrane segments (helical) span residues 14-34 (ALAL…ACII), 37-57 (PLFV…TLLA), and 58-78 (SGFT…SWLY). Residues 84–106 (RDLPKIPGLTPPAPASNPAGSGV) form a disordered region.

The protein belongs to the oleosin family. In terms of processing, proteolytically cleaved following anther tapetal breakdown. In terms of tissue distribution, present in pollen (at protein level). Inflorescence-specific expression, especially in flowers florets.

It localises to the secreted. The protein resides in the extracellular space. The protein localises to the extracellular matrix. It is found in the pollen coat. Its subcellular location is the lipid droplet. It localises to the membrane. In terms of biological role, lipid-binding oleosin involved in anther tapetum development, especially for the physiology of tapetosomes. Also implicated in the formation of pollen coat. This is Tapetal oleosin GRP-19 from Arabidopsis thaliana (Mouse-ear cress).